We begin with the raw amino-acid sequence, 358 residues long: Uroporphyrinogen decarboxylase (358 aa).

Residues 29–33, F48, D79, Y155, S210, and H330 contribute to the substrate site; that span reads RQAGR.

This sequence belongs to the uroporphyrinogen decarboxylase family. In terms of assembly, homodimer.

The protein localises to the cytoplasm. The catalysed reaction is uroporphyrinogen III + 4 H(+) = coproporphyrinogen III + 4 CO2. The protein operates within porphyrin-containing compound metabolism; protoporphyrin-IX biosynthesis; coproporphyrinogen-III from 5-aminolevulinate: step 4/4. Functionally, catalyzes the decarboxylation of four acetate groups of uroporphyrinogen-III to yield coproporphyrinogen-III. This is Uroporphyrinogen decarboxylase from Bordetella pertussis (strain Tohama I / ATCC BAA-589 / NCTC 13251).